A 43-amino-acid chain; its full sequence is Protein PsbN (43 aa).

Residues 5-27 (TLVAISISGLLVSFTGYALYTAF) form a helical membrane-spanning segment.

It belongs to the PsbN family.

Its subcellular location is the plastid. The protein resides in the chloroplast thylakoid membrane. May play a role in photosystem I and II biogenesis. This is Protein PsbN from Coelogyne cristata (Orchid).